Consider the following 318-residue polypeptide: Galactofuranose-binding protein YtfQ (318 aa).

Residues Met-1 to Ala-21 form the signal peptide. Beta-D-galactofuranose-binding positions include Glu-34–Arg-38, Asp-111–Arg-112, Arg-167, Asn-220, and Asp-248. A disulfide bridge connects residues Cys-150 and Cys-214.

This sequence belongs to the bacterial solute-binding protein 2 family. As to quaternary structure, the complex is composed of two ATP-binding proteins (YtfR), two transmembrane proteins (YtfT and YjfF) and a solute-binding protein (YtfQ).

The protein resides in the periplasm. Part of the ABC transporter complex YtfQRT-YjfF involved in galactofuranose transport. Binds to both alpha- and beta-galactofuranose. This is Galactofuranose-binding protein YtfQ (ytfQ) from Escherichia coli (strain K12).